Reading from the N-terminus, the 380-residue chain is MKKPIGILSPGVALGTAGGAMSSKFFLMALATFFSFAQVVIEANSWWSLGMNNPVQMSEVYIIGAQPLCSQLAGLSQGQKKLCHLYQDHMQYIGEGAKTGIKECQYQFRHRRWNCSTVDNTSVFGRVMQIGSRETAFTYAVSAAGVVNAMSRACREGELSTCGCSRAARPKDLPRDWLWGGCGDNIDYGYRFAKEFVDARERERIHAKGSYESARILMNLHNNEAGRRTVYNLADVACKCHGVSGSCSLKTCWLQLADFRKVGDALKEKYDSAAAMRLNSRGKLVQVNSRFNSPTTQDLVYIDPSPDYCVRNESTGSLGTQGRLCNKTSEGMDGCELMCCGRGYDQFKTVQTERCHCKFHWCCYVKCKKCTEIVDQFVCK.

An N-terminal signal peptide occupies residues Met1–Ala37. The propeptide occupies Gln38–Tyr61. Cys104 and Cys115 are disulfide-bonded. 2 N-linked (GlcNAc...) asparagine glycosylation sites follow: Asn114 and Asn120. 10 disulfide bridges follow: Cys154-Cys162, Cys164-Cys182, Cys238-Cys252, Cys240-Cys247, Cys309-Cys340, Cys325-Cys335, Cys339-Cys379, Cys355-Cys370, Cys357-Cys367, and Cys362-Cys363. A lipid anchor (O-palmitoleoyl serine; by PORCN) is attached at Ser244. Residues Asn312 and Asn326 are each glycosylated (N-linked (GlcNAc...) asparagine).

It belongs to the Wnt family. As to quaternary structure, forms a soluble 1:1 complex with AFM; this prevents oligomerization and is required for prolonged biological activity. The complex with AFM may represent the physiological form in body fluids. Homooligomer; disulfide-linked, leading to inactivation. Interacts with PORCN. Interacts with WLS. Interacts with glypican GCP3. Interacts with PKD1 (via extracellular domain). Interacts with TMEM67. In terms of processing, glycosylation is necessary for secretion but not for activity. Post-translationally, palmitoleoylation is required for efficient binding to frizzled receptors. Depalmitoleoylation leads to Wnt signaling pathway inhibition. Proteolytic processing by TIKI1 and TIKI2 promotes oxidation and formation of large disulfide-bond oligomers, leading to inactivation of WNT5A. Expressed in a gradient at the caudal end of the embryo during gastrulation and later in the distal-most aspect of several structures that extend from the body such as the limbs and genital tubercle.

It localises to the secreted. It is found in the extracellular space. The protein resides in the extracellular matrix. Ligand for members of the frizzled family of seven transmembrane receptors. Can activate or inhibit canonical Wnt signaling, depending on receptor context. In the presence of FZD4, activates beta-catenin signaling. In the presence of ROR2, inhibits the canonical Wnt pathway by promoting beta-catenin degradation through a GSK3-independent pathway which involves down-regulation of beta-catenin-induced reporter gene expression. Suppression of the canonical pathway allows chondrogenesis to occur and inhibits tumor formation. Stimulates cell migration. Decreases proliferation, migration, invasiveness and clonogenicity of carcinoma cells and may act as a tumor suppressor. Mediates motility of melanoma cells. Required during embryogenesis for extension of the primary anterior-posterior axis and for outgrowth of limbs and the genital tubercle. Inhibits type II collagen expression in chondrocytes. This Mus musculus (Mouse) protein is Protein Wnt-5a (Wnt5a).